Here is a 266-residue protein sequence, read N- to C-terminus: 4-diphosphocytidyl-2-C-methyl-D-erythritol kinase (266 aa).

Residue lysine 11 is part of the active site. An ATP-binding site is contributed by 103–113; the sequence is PTFAGLGGGSS. Aspartate 145 is a catalytic residue.

This sequence belongs to the GHMP kinase family. IspE subfamily.

The enzyme catalyses 4-CDP-2-C-methyl-D-erythritol + ATP = 4-CDP-2-C-methyl-D-erythritol 2-phosphate + ADP + H(+). It participates in isoprenoid biosynthesis; isopentenyl diphosphate biosynthesis via DXP pathway; isopentenyl diphosphate from 1-deoxy-D-xylulose 5-phosphate: step 3/6. In terms of biological role, catalyzes the phosphorylation of the position 2 hydroxy group of 4-diphosphocytidyl-2C-methyl-D-erythritol. This Sulfurimonas denitrificans (strain ATCC 33889 / DSM 1251) (Thiomicrospira denitrificans (strain ATCC 33889 / DSM 1251)) protein is 4-diphosphocytidyl-2-C-methyl-D-erythritol kinase.